The chain runs to 190 residues: Probable thymidylate kinase (190 aa).

9-16 contacts ATP; it reads GIDGAGKT.

This sequence belongs to the thymidylate kinase family.

The enzyme catalyses dTMP + ATP = dTDP + ADP. The sequence is that of Probable thymidylate kinase (tmk1) from Sulfurisphaera tokodaii (strain DSM 16993 / JCM 10545 / NBRC 100140 / 7) (Sulfolobus tokodaii).